A 2152-amino-acid polypeptide reads, in one-letter code: Oxygen-regulated protein 1 (2152 aa).

Over residues Met1 to Asp19 the composition is skewed to polar residues. The segment at Met1–Arg25 is disordered. 2 consecutive Doublecortin domains span residues Lys36 to Asp118 and Arg154 to Asp233. 3 disordered regions span residues Val353 to Ser375, Asp1435 to Ser1455, and Asp1587 to Gln1616.

As to quaternary structure, interacts (via the doublecortin domains) with microtubules. Interacts with RP1L1. Interacts with MAK.

Its subcellular location is the cytoplasm. It localises to the cytoskeleton. The protein localises to the cilium axoneme. The protein resides in the cell projection. It is found in the cilium. Its subcellular location is the photoreceptor outer segment. Its function is as follows. Microtubule-associated protein regulating the stability and length of the microtubule-based axoneme of photoreceptors. Required for the differentiation of photoreceptor cells, it plays a role in the organization of the outer segment of rod and cone photoreceptors ensuring the correct orientation and higher-order stacking of outer segment disks along the photoreceptor axoneme. The sequence is that of Oxygen-regulated protein 1 (RP1) from Papio hamadryas (Hamadryas baboon).